The primary structure comprises 99 residues: Ubiquitin-related modifier 1 (99 aa).

The residue at position 99 (G99) is a 1-thioglycine. G99 is covalently cross-linked (Glycyl lysine isopeptide (Gly-Lys) (interchain with K-? in acceptor proteins)).

Belongs to the URM1 family. As to quaternary structure, homodimer; homodimerization may provide an autoprotection to the highly active C-terminal residue before attacking its substrates. Interacts with NCS2 and NCS6. Forms a conjugate with the target protein AHP1. Post-translationally, C-terminal thiocarboxylation occurs in 2 steps, it is first acyl-adenylated (-COAMP) via the hesA/moeB/thiF part of UBA4, then thiocarboxylated (-COSH) via the rhodanese domain of UBA4.

It localises to the cytoplasm. Its subcellular location is the nucleus. The protein operates within tRNA modification; 5-methoxycarbonylmethyl-2-thiouridine-tRNA biosynthesis. Acts as a sulfur carrier required for 2-thiolation of mcm(5)S(2)U at tRNA wobble positions of cytosolic tRNA(Lys), tRNA(Glu) and tRNA(Gln). Serves as sulfur donor in tRNA 2-thiolation reaction by being thiocarboxylated (-COSH) at its C-terminus by the MOCS3 homolog UBA4. The sulfur is then transferred to tRNA to form 2-thiolation of mcm(5)S(2)U. Prior mcm(5) tRNA modification by the elongator complex is required for 2-thiolation. Also acts as a ubiquitin-like protein (UBL) that is covalently conjugated via an isopeptide bond to lysine residues of target proteins such as AHP1. The thiocarboxylated form serves as substrate for conjugation and oxidative stress specifically induces the formation of UBL-protein conjugates. The polypeptide is Ubiquitin-related modifier 1 (Saccharomyces cerevisiae (strain RM11-1a) (Baker's yeast)).